A 303-amino-acid chain; its full sequence is ATP synthase gamma chain (303 aa).

Belongs to the ATPase gamma chain family. In terms of assembly, F-type ATPases have 2 components, CF(1) - the catalytic core - and CF(0) - the membrane proton channel. CF(1) has five subunits: alpha(3), beta(3), gamma(1), delta(1), epsilon(1). CF(0) has three main subunits: a, b and c.

Its subcellular location is the cell membrane. Functionally, produces ATP from ADP in the presence of a proton gradient across the membrane. The gamma chain is believed to be important in regulating ATPase activity and the flow of protons through the CF(0) complex. This is ATP synthase gamma chain from Oenococcus oeni (strain ATCC BAA-331 / PSU-1).